A 129-amino-acid chain; its full sequence is Small ribosomal subunit protein uS9 (129 aa).

The protein belongs to the universal ribosomal protein uS9 family.

The chain is Small ribosomal subunit protein uS9 from Helicobacter pylori (strain Shi470).